A 155-amino-acid chain; its full sequence is Ribosome maturation factor RimP (155 aa).

This sequence belongs to the RimP family.

The protein resides in the cytoplasm. Its function is as follows. Required for maturation of 30S ribosomal subunits. The sequence is that of Ribosome maturation factor RimP from Staphylococcus saprophyticus subsp. saprophyticus (strain ATCC 15305 / DSM 20229 / NCIMB 8711 / NCTC 7292 / S-41).